A 329-amino-acid chain; its full sequence is tRNA pseudouridine synthase B (329 aa).

Substrate is bound at residue H43. D48 acts as the Nucleophile in catalysis. Positions 76, 179, and 200 each coordinate substrate.

It belongs to the pseudouridine synthase TruB family. Type 1 subfamily.

The enzyme catalyses uridine(55) in tRNA = pseudouridine(55) in tRNA. Functionally, responsible for synthesis of pseudouridine from uracil-55 in the psi GC loop of transfer RNAs. The protein is tRNA pseudouridine synthase B of Yersinia enterocolitica serotype O:8 / biotype 1B (strain NCTC 13174 / 8081).